Consider the following 106-residue polypeptide: Urease subunit beta (106 aa).

Belongs to the urease beta subunit family. Heterotrimer of UreA (gamma), UreB (beta) and UreC (alpha) subunits. Three heterotrimers associate to form the active enzyme.

Its subcellular location is the cytoplasm. The catalysed reaction is urea + 2 H2O + H(+) = hydrogencarbonate + 2 NH4(+). The protein operates within nitrogen metabolism; urea degradation; CO(2) and NH(3) from urea (urease route): step 1/1. The chain is Urease subunit beta from Citrobacter koseri (strain ATCC BAA-895 / CDC 4225-83 / SGSC4696).